The following is an 86-amino-acid chain: Mu-theraphotoxin-Cg2a 3 (86 aa).

The N-terminal stretch at 1–21 (MKVSVVITLAVLGVMFVWASA) is a signal peptide. The propeptide occupies 22 to 50 (AELKERGSDQRDSPAWIKSMERIFQSEER). Disulfide bonds link Cys52–Cys66, Cys59–Cys71, and Cys65–Cys78. Phe84 is subject to Phenylalanine amide.

This sequence belongs to the neurotoxin 10 (Hwtx-1) family. 37 (Jztx-31) subfamily. As to expression, expressed by the venom gland.

The protein localises to the secreted. Functionally, inhibits both peak current and fast inactivation of voltage-gated sodium channels (Nav) channels. Inhibits the inactivation of Nav on DRG neurons (EC(50)=1.77 uM) and peak current of cardiac myocytes (IC(50)=0.90 uM). In Chilobrachys guangxiensis (Chinese earth tiger tarantula), this protein is Mu-theraphotoxin-Cg2a 3.